We begin with the raw amino-acid sequence, 335 residues long: Galactosylgalactosylxylosylprotein 3-beta-glucuronosyltransferase 1 (335 aa).

Residues 1-6 (MPKRRD) lie on the Cytoplasmic side of the membrane. Residues 3 to 5 (KRR) are essential for transport from endoplasmic reticulum to Golgi apparatus and interaction with SAR1A. The helical; Signal-anchor for type II membrane protein transmembrane segment at 7 to 27 (ILAIVLIVLPWTLLVTVWHQS) threads the bilayer. The Lumenal portion of the chain corresponds to 28 to 335 (TIAPLLTTHK…KGFTDPTVEI (308 aa)). 92–94 (PTY) is a binding site for UDP-alpha-D-glucuronate. Phosphothreonine occurs at positions 104 and 109. Residue aspartate 123 participates in UDP-alpha-D-glucuronate binding. Residue asparagine 141 is glycosylated (N-linked (GlcNAc...) asparagine). Residues arginine 166 and arginine 171 each coordinate UDP-alpha-D-glucuronate. An N-linked (GlcNAc...) asparagine glycan is attached at asparagine 185. 196 to 198 (DDD) contributes to the UDP-alpha-D-glucuronate binding site. Aspartate 198 lines the Mn(2+) pocket. The interaction with galactose moiety of substrate glycoprotein stretch occupies residues 246–255 (FDPHRPFAID). Catalysis depends on glutamate 285, which acts as the Proton donor/acceptor. Asparagine 304 is a glycosylation site (N-linked (GlcNAc...) asparagine). Position 312–314 (312–314 (HTR)) interacts with UDP-alpha-D-glucuronate.

The protein belongs to the glycosyltransferase 43 family. As to quaternary structure, homodimer. Interacts with SAR1A. Mn(2+) is required as a cofactor. The soluble form derives from the membrane form by proteolytic processing.

Its subcellular location is the golgi apparatus membrane. The protein localises to the secreted. It catalyses the reaction 3-O-(beta-D-galactosyl-(1-&gt;3)-beta-D-galactosyl-(1-&gt;4)-beta-D-xylosyl)-L-seryl-[protein] + UDP-alpha-D-glucuronate = 3-O-(beta-D-GlcA-(1-&gt;3)-beta-D-Gal-(1-&gt;3)-beta-D-Gal-(1-&gt;4)-beta-D-Xyl)-L-seryl-[protein] + UDP + H(+). It functions in the pathway protein modification; protein glycosylation. Involved in the biosynthesis of L2/HNK-1 carbohydrate epitope on glycoproteins. Can also play a role in glycosaminoglycan biosynthesis. Substrates include asialo-orosomucoid (ASOR), asialo-fetuin, and asialo-neural cell adhesion molecule. Requires sphingomyelin for activity: stearoyl-sphingomyelin was the most effective, followed by palmitoyl-sphingomyelin and lignoceroyl-sphingomyelin. Activity was demonstrated only for sphingomyelin with a saturated fatty acid and not for that with an unsaturated fatty acid, regardless of the length of the acyl group. The chain is Galactosylgalactosylxylosylprotein 3-beta-glucuronosyltransferase 1 from Canis lupus familiaris (Dog).